The primary structure comprises 100 residues: Large ribosomal subunit protein uL23 (100 aa).

Belongs to the universal ribosomal protein uL23 family. In terms of assembly, part of the 50S ribosomal subunit. Contacts protein L29, and trigger factor when it is bound to the ribosome.

Functionally, one of the early assembly proteins it binds 23S rRNA. One of the proteins that surrounds the polypeptide exit tunnel on the outside of the ribosome. Forms the main docking site for trigger factor binding to the ribosome. In Photobacterium profundum (strain SS9), this protein is Large ribosomal subunit protein uL23.